Reading from the N-terminus, the 491-residue chain is Aspartyl/glutamyl-tRNA(Asn/Gln) amidotransferase subunit B (491 aa).

This sequence belongs to the GatB/GatE family. GatB subfamily. In terms of assembly, heterotrimer of A, B and C subunits.

It carries out the reaction L-glutamyl-tRNA(Gln) + L-glutamine + ATP + H2O = L-glutaminyl-tRNA(Gln) + L-glutamate + ADP + phosphate + H(+). The enzyme catalyses L-aspartyl-tRNA(Asn) + L-glutamine + ATP + H2O = L-asparaginyl-tRNA(Asn) + L-glutamate + ADP + phosphate + 2 H(+). Functionally, allows the formation of correctly charged Asn-tRNA(Asn) or Gln-tRNA(Gln) through the transamidation of misacylated Asp-tRNA(Asn) or Glu-tRNA(Gln) in organisms which lack either or both of asparaginyl-tRNA or glutaminyl-tRNA synthetases. The reaction takes place in the presence of glutamine and ATP through an activated phospho-Asp-tRNA(Asn) or phospho-Glu-tRNA(Gln). The sequence is that of Aspartyl/glutamyl-tRNA(Asn/Gln) amidotransferase subunit B from Prochlorococcus marinus (strain NATL2A).